The following is an 888-amino-acid chain: Probable disease resistance protein At5g63020 (888 aa).

Residues 22-66 (LNRNGDYIHGLEENLTALQRALEQIEQRREDLLRKILSEERRGLQ) are a coiled coil. Residues 139 to 442 (AERVDAARVE…GEGFIDRNKG (304 aa)) enclose the NB-ARC domain. 181–188 (GMGGVGKT) is a binding site for ATP. LRR repeat units lie at residues 512 to 533 (VARR…PESP), 534 to 555 (QLIT…FFRL), 558 to 580 (MLVV…ISEC), 582 to 604 (SLQY…VELR), and 605 to 627 (KLLY…SGLT).

It belongs to the disease resistance NB-LRR family.

In terms of biological role, probable disease resistance protein. In Arabidopsis thaliana (Mouse-ear cress), this protein is Probable disease resistance protein At5g63020.